Here is a 396-residue protein sequence, read N- to C-terminus: S-adenosylmethionine synthase (396 aa).

His16 lines the ATP pocket. Asp18 lines the Mg(2+) pocket. Glu44 contacts K(+). Residues Glu57 and Gln100 each contribute to the L-methionine site. Residues 100 to 110 (QSVDIAQGVDR) form a flexible loop region. Residues 165-167 (DAK), Asp240, 246-247 (RK), Ala263, and Lys267 contribute to the ATP site. Residue Asp240 coordinates L-methionine. An L-methionine-binding site is contributed by Lys271.

This sequence belongs to the AdoMet synthase family. As to quaternary structure, homotetramer; dimer of dimers. Requires Mg(2+) as cofactor. It depends on K(+) as a cofactor.

It is found in the cytoplasm. It catalyses the reaction L-methionine + ATP + H2O = S-adenosyl-L-methionine + phosphate + diphosphate. It functions in the pathway amino-acid biosynthesis; S-adenosyl-L-methionine biosynthesis; S-adenosyl-L-methionine from L-methionine: step 1/1. Its function is as follows. Catalyzes the formation of S-adenosylmethionine (AdoMet) from methionine and ATP. The overall synthetic reaction is composed of two sequential steps, AdoMet formation and the subsequent tripolyphosphate hydrolysis which occurs prior to release of AdoMet from the enzyme. This is S-adenosylmethionine synthase from Pseudomonas entomophila (strain L48).